A 176-amino-acid chain; its full sequence is dCTP deaminase (176 aa).

DCTP is bound by residues 102-107 (RSTFAR) and Asp-118. The active-site Proton donor/acceptor is the Glu-128. DCTP-binding residues include Tyr-160 and Gln-167.

Belongs to the dCTP deaminase family. In terms of assembly, homotrimer.

The catalysed reaction is dCTP + H2O + H(+) = dUTP + NH4(+). It participates in pyrimidine metabolism; dUMP biosynthesis; dUMP from dCTP (dUTP route): step 1/2. In terms of biological role, catalyzes the deamination of dCTP to dUTP. The chain is dCTP deaminase from Hyperthermus butylicus (strain DSM 5456 / JCM 9403 / PLM1-5).